A 478-amino-acid polypeptide reads, in one-letter code: Solute carrier family 49 member 4 (478 aa).

Residues 1-27 (MGSGWSSEEEERQPLLGPGLGPAPGAT) are disordered. Residues 1 to 51 (MGSGWSSEEEERQPLLGPGLGPAPGATRRGREAAAVLPAAGPSPGRVYGRR) are Cytoplasmic-facing. The short motif at 15–16 (LL) is the Di-leucine motif; mediates lysosomal localization element. The helical transmembrane segment at 52–72 (WLVLLLFSLLAFAQGLVWNTW) threads the bilayer. Residues 73–89 (GPIQNSARQAYSFTGWD) lie on the Lumenal side of the membrane. A helical transmembrane segment spans residues 90–110 (IALLVLWGPIGFLPCFAFMWL). Over 111 to 117 (LDKRGLR) the chain is Cytoplasmic. A helical transmembrane segment spans residues 118-138 (ITVLLTSFLMVLGTGLRCIPV). The Lumenal segment spans residues 139–152 (SDLTLKKRLIHGGQ). Residues 153–173 (ILNGLAGPTVMNAAPFLSTTW) form a helical membrane-spanning segment. Residues 174 to 184 (FSADERATATA) lie on the Cytoplasmic side of the membrane. Residues 185–205 (IASMLSYLGGACAFLVGPLVV) form a helical membrane-spanning segment. Residues 206 to 229 (PAPNGTAPLLTAESSRDHIKDRIE) are Lumenal-facing. The N-linked (GlcNAc...) asparagine glycan is linked to asparagine 209. A helical membrane pass occupies residues 230–250 (TVLYAEFGVVCLIFSATLAYF). The Cytoplasmic segment spans residues 251–281 (PPRPPLPPSVAAASQRLSYRRSFCRLLSNLR). A helical membrane pass occupies residues 282–302 (FLMIALAYAIPLGVFAGWSGV). At 303 to 314 (LDLILTPVHVSQ) the chain is on the lumenal side. Residues 315-335 (VDAGWIGFWSIVGGCVVGIAM) traverse the membrane as a helical segment. The Cytoplasmic portion of the chain corresponds to 336-347 (ARFADFIRGMLK). Residues 348–368 (LILLLLFSGATLSSTWFTLTC) traverse the membrane as a helical segment. Over 369 to 384 (LNSVTHLPLTTVTLYA) the chain is Lumenal. A helical membrane pass occupies residues 385–405 (SCILLGVFLNSSVPIFFELFV). Over 406 to 414 (ETVYPVPEG) the chain is Cytoplasmic. The helical transmembrane segment at 415-435 (ITCGVVTFLSNMFMGVLLFFV) threads the bilayer. The Lumenal segment spans residues 436–442 (TFYHTEL). A helical membrane pass occupies residues 443–463 (SWFNWCLPGSCLLSLLLILCF). Residues 464–478 (RESYDRLYLDVVVSV) are Cytoplasmic-facing.

The protein belongs to the major facilitator superfamily. Cleaved in lysosomes by cathepsin L between Leu-214 and Ala-261, generating a N-glycosylated N-terminal and a non-glycosylated C-terminal fragment.

The protein resides in the lysosome membrane. The catalysed reaction is pyridoxine(out) + n H(+)(out) = pyridoxine(in) + n H(+)(in). Functionally, mediates H(+)-dependent pyridoxine transport. This chain is Solute carrier family 49 member 4 (Slc49a4), found in Rattus norvegicus (Rat).